The following is a 481-amino-acid chain: Aspartyl/glutamyl-tRNA(Asn/Gln) amidotransferase subunit B (481 aa).

It belongs to the GatB/GatE family. GatB subfamily. In terms of assembly, heterotrimer of A, B and C subunits.

It catalyses the reaction L-glutamyl-tRNA(Gln) + L-glutamine + ATP + H2O = L-glutaminyl-tRNA(Gln) + L-glutamate + ADP + phosphate + H(+). The catalysed reaction is L-aspartyl-tRNA(Asn) + L-glutamine + ATP + H2O = L-asparaginyl-tRNA(Asn) + L-glutamate + ADP + phosphate + 2 H(+). Functionally, allows the formation of correctly charged Asn-tRNA(Asn) or Gln-tRNA(Gln) through the transamidation of misacylated Asp-tRNA(Asn) or Glu-tRNA(Gln) in organisms which lack either or both of asparaginyl-tRNA or glutaminyl-tRNA synthetases. The reaction takes place in the presence of glutamine and ATP through an activated phospho-Asp-tRNA(Asn) or phospho-Glu-tRNA(Gln). In Carboxydothermus hydrogenoformans (strain ATCC BAA-161 / DSM 6008 / Z-2901), this protein is Aspartyl/glutamyl-tRNA(Asn/Gln) amidotransferase subunit B.